A 571-amino-acid polypeptide reads, in one-letter code: Proline--tRNA ligase (571 aa).

It belongs to the class-II aminoacyl-tRNA synthetase family. ProS type 1 subfamily. In terms of assembly, homodimer.

It is found in the cytoplasm. It catalyses the reaction tRNA(Pro) + L-proline + ATP = L-prolyl-tRNA(Pro) + AMP + diphosphate. Its function is as follows. Catalyzes the attachment of proline to tRNA(Pro) in a two-step reaction: proline is first activated by ATP to form Pro-AMP and then transferred to the acceptor end of tRNA(Pro). As ProRS can inadvertently accommodate and process non-cognate amino acids such as alanine and cysteine, to avoid such errors it has two additional distinct editing activities against alanine. One activity is designated as 'pretransfer' editing and involves the tRNA(Pro)-independent hydrolysis of activated Ala-AMP. The other activity is designated 'posttransfer' editing and involves deacylation of mischarged Ala-tRNA(Pro). The misacylated Cys-tRNA(Pro) is not edited by ProRS. The polypeptide is Proline--tRNA ligase (Pseudomonas paraeruginosa (strain DSM 24068 / PA7) (Pseudomonas aeruginosa (strain PA7))).